The primary structure comprises 200 residues: Transcription factor FapR (200 aa).

Belongs to the FapR family.

In terms of biological role, transcriptional factor involved in regulation of membrane lipid biosynthesis by repressing genes involved in fatty acid and phospholipid metabolism. The polypeptide is Transcription factor FapR (Caldanaerobacter subterraneus subsp. tengcongensis (strain DSM 15242 / JCM 11007 / NBRC 100824 / MB4) (Thermoanaerobacter tengcongensis)).